We begin with the raw amino-acid sequence, 67 residues long: Conotoxin TsMMSK-011 (67 aa).

The first 20 residues, methionine 1 to alanine 20, serve as a signal peptide directing secretion. A propeptide spanning residues valine 21–valine 50 is cleaved from the precursor. Intrachain disulfides connect cysteine 53-cysteine 65, cysteine 54-cysteine 61, and cysteine 58-cysteine 64. Proline 63 is subject to 4-hydroxyproline.

The protein belongs to the conotoxin M superfamily. In terms of tissue distribution, expressed by the venom duct.

It localises to the secreted. This is Conotoxin TsMMSK-011 from Conus tessulatus (Tessellate cone).